Here is a 132-residue protein sequence, read N- to C-terminus: Fatty acid-binding protein, brain (132 aa).

Val-2 is modified (N-acetylvaline). An a fatty acid-binding site is contributed by 127 to 129; sequence RHY.

This sequence belongs to the calycin superfamily. Fatty-acid binding protein (FABP) family. As to expression, expressed in brain and other neural tissues.

It localises to the cytoplasm. Its function is as follows. B-FABP could be involved in the transport of a so far unknown hydrophobic ligand with potential morphogenic activity during CNS development. It is required for the establishment of the radial glial fiber system in developing brain, a system that is necessary for the migration of immature neurons to establish cortical layers. In Homo sapiens (Human), this protein is Fatty acid-binding protein, brain (FABP7).